Reading from the N-terminus, the 497-residue chain is Acetyl-coenzyme A carboxylase carboxyl transferase subunit beta, chloroplastic (497 aa).

The tract at residues 30-50 (GPVENTTVNEDPTRNDTDKNI) is disordered. Over residues 40–50 (DPTRNDTDKNI) the composition is skewed to basic and acidic residues. In terms of domain architecture, CoA carboxyltransferase N-terminal spans 230–497 (VQCECENCYG…FFPLNQNSIK (268 aa)). 4 residues coordinate Zn(2+): C232, C237, C253, and C256. The C4-type zinc finger occupies 232 to 256 (CECENCYGVNYKKSLNSKMNICEQC).

The protein belongs to the AccD/PCCB family. Acetyl-CoA carboxylase is a heterohexamer composed of biotin carboxyl carrier protein, biotin carboxylase and 2 subunits each of ACCase subunit alpha and ACCase plastid-coded subunit beta (accD). Requires Zn(2+) as cofactor.

Its subcellular location is the plastid. It localises to the chloroplast stroma. The enzyme catalyses N(6)-carboxybiotinyl-L-lysyl-[protein] + acetyl-CoA = N(6)-biotinyl-L-lysyl-[protein] + malonyl-CoA. It functions in the pathway lipid metabolism; malonyl-CoA biosynthesis; malonyl-CoA from acetyl-CoA: step 1/1. Component of the acetyl coenzyme A carboxylase (ACC) complex. Biotin carboxylase (BC) catalyzes the carboxylation of biotin on its carrier protein (BCCP) and then the CO(2) group is transferred by the transcarboxylase to acetyl-CoA to form malonyl-CoA. The chain is Acetyl-coenzyme A carboxylase carboxyl transferase subunit beta, chloroplastic from Gossypium hirsutum (Upland cotton).